The primary structure comprises 316 residues: HPr kinase/phosphorylase (316 aa).

Catalysis depends on residues His-143 and Lys-164. 158–165 (GEAGSGKS) is a binding site for ATP. Ser-165 is a binding site for Mg(2+). The Proton acceptor; for phosphorylation activity. Proton donor; for dephosphorylation activity role is filled by Asp-182. Residues 206-215 (LEVRGLGVLN) are important for the catalytic mechanism of both phosphorylation and dephosphorylation. Position 207 (Glu-207) interacts with Mg(2+). Residue Arg-251 is part of the active site. An important for the catalytic mechanism of dephosphorylation region spans residues 272 to 277 (PVMPGR).

It belongs to the HPrK/P family. Homohexamer. Mg(2+) serves as cofactor.

The enzyme catalyses [HPr protein]-L-serine + ATP = [HPr protein]-O-phospho-L-serine + ADP + H(+). It catalyses the reaction [HPr protein]-O-phospho-L-serine + phosphate + H(+) = [HPr protein]-L-serine + diphosphate. Functionally, catalyzes the ATP- as well as the pyrophosphate-dependent phosphorylation of a specific serine residue in HPr, a phosphocarrier protein of the phosphoenolpyruvate-dependent sugar phosphotransferase system (PTS). HprK/P also catalyzes the pyrophosphate-producing, inorganic phosphate-dependent dephosphorylation (phosphorolysis) of seryl-phosphorylated HPr (P-Ser-HPr). The protein is HPr kinase/phosphorylase of Xanthomonas axonopodis pv. citri (strain 306).